The chain runs to 301 residues: UDP-N-acetylenolpyruvoylglucosamine reductase (301 aa).

The FAD-binding PCMH-type domain occupies 30–194 (VGGEADYLVF…LSVKFALAPG (165 aa)). The active site involves R173. The Proton donor role is filled by S223. The active site involves E293.

Belongs to the MurB family. Requires FAD as cofactor.

It is found in the cytoplasm. The catalysed reaction is UDP-N-acetyl-alpha-D-muramate + NADP(+) = UDP-N-acetyl-3-O-(1-carboxyvinyl)-alpha-D-glucosamine + NADPH + H(+). The protein operates within cell wall biogenesis; peptidoglycan biosynthesis. In terms of biological role, cell wall formation. The polypeptide is UDP-N-acetylenolpyruvoylglucosamine reductase (Streptococcus pneumoniae (strain 70585)).